Here is a 120-residue protein sequence, read N- to C-terminus: MKKLTKTHSHRQQKLASIINEALIEILRRGKMLDTRLFDCPLTITKVIVTADLKIANCYFLPFNTKLTIDEIMDALNNSKNAIRNFITNKINMKFSPDIRFYYDHGFDNAIKVAHLLKDL.

The protein belongs to the RbfA family. As to quaternary structure, monomer. Binds 30S ribosomal subunits, but not 50S ribosomal subunits or 70S ribosomes.

Its subcellular location is the cytoplasm. Its function is as follows. One of several proteins that assist in the late maturation steps of the functional core of the 30S ribosomal subunit. Associates with free 30S ribosomal subunits (but not with 30S subunits that are part of 70S ribosomes or polysomes). Required for efficient processing of 16S rRNA. May interact with the 5'-terminal helix region of 16S rRNA. The sequence is that of Ribosome-binding factor A from Rickettsia africae (strain ESF-5).